The sequence spans 342 residues: Foldase protein PrsA (342 aa).

The first 22 residues, 1–22 (MVSVKKIVASALVGVLMFSAVG), serve as a signal peptide directing secretion. The N-palmitoyl cysteine moiety is linked to residue Cys-23. Cys-23 carries the S-diacylglycerol cysteine lipid modification. The 96-residue stretch at 189-284 (DSGVLTKHLL…FGYHIIQAGA (96 aa)) folds into the PpiC domain.

The protein belongs to the PrsA family.

The protein localises to the cell membrane. The enzyme catalyses [protein]-peptidylproline (omega=180) = [protein]-peptidylproline (omega=0). In terms of biological role, plays a major role in protein secretion by helping the post-translocational extracellular folding of several secreted proteins. This is Foldase protein PrsA from Clostridium perfringens (strain 13 / Type A).